Reading from the N-terminus, the 260-residue chain is Flap endonuclease Xni (260 aa).

Residue Asp109 participates in Mg(2+) binding. The 5'-3' exonuclease domain maps to 165–259 (VKPSQLADYW…DIRFTGPNKA (95 aa)). The K(+) site is built by Leu176, Pro185, Val187, and Val190. Positions 189–194 (GVGPKA) are interaction with DNA.

It belongs to the Xni family. Mg(2+) serves as cofactor. Requires K(+) as cofactor.

Has flap endonuclease activity. During DNA replication, flap endonucleases cleave the 5'-overhanging flap structure that is generated by displacement synthesis when DNA polymerase encounters the 5'-end of a downstream Okazaki fragment. In Vibrio campbellii (strain ATCC BAA-1116), this protein is Flap endonuclease Xni.